Reading from the N-terminus, the 451-residue chain is Probable NADH dehydrogenase (451 aa).

Residue 41-71 participates in FAD binding; the sequence is KLIILGCGWGSYSFLKNLNSIKYDITVISPR. Position 199–236 (199–236) interacts with NAD(+); sequence LSFVIVGGGATGIEFTSELNDFFSEDLSRLFPFVPVNE.

This sequence belongs to the NADH dehydrogenase family. The cofactor is FAD.

The catalysed reaction is a ubiquinone + NADH + 5 H(+)(in) = a ubiquinol + NAD(+) + 4 H(+)(out). The polypeptide is Probable NADH dehydrogenase (Dictyostelium discoideum (Social amoeba)).